The chain runs to 530 residues: 4-alpha-glucanotransferase (530 aa).

Belongs to the disproportionating enzyme family.

It localises to the cytoplasm. It catalyses the reaction Transfers a segment of a (1-&gt;4)-alpha-D-glucan to a new position in an acceptor, which may be glucose or a (1-&gt;4)-alpha-D-glucan.. This chain is 4-alpha-glucanotransferase (malQ), found in Chlamydia caviae (strain ATCC VR-813 / DSM 19441 / 03DC25 / GPIC) (Chlamydophila caviae).